A 229-amino-acid polypeptide reads, in one-letter code: Heptaprenylglyceryl phosphate synthase (229 aa).

Residue Lys12 participates in sn-glycerol 1-phosphate binding. The Mg(2+) site is built by Asp14 and Thr40. Sn-glycerol 1-phosphate-binding positions include 159–164 (YIEYSG), Gly189, and 209–210 (GN).

It belongs to the GGGP/HepGP synthase family. Group I subfamily. As to quaternary structure, homodimer. Requires Mg(2+) as cofactor.

The enzyme catalyses sn-glycerol 1-phosphate + all-trans-heptaprenyl diphosphate = 3-heptaprenyl-sn-glycero-1-phosphate + diphosphate. It participates in membrane lipid metabolism; glycerophospholipid metabolism. In terms of biological role, prenyltransferase that catalyzes in vivo the transfer of the heptaprenyl moiety of heptaprenyl pyrophosphate (HepPP; 35 carbon atoms) to the C3 hydroxyl of sn-glycerol-1-phosphate (G1P), producing heptaprenylglyceryl phosphate (HepGP). This reaction is an ether-bond-formation step in the biosynthesis of archaea-type G1P-based membrane lipids found in Bacillales. In Staphylococcus carnosus (strain TM300), this protein is Heptaprenylglyceryl phosphate synthase.